The chain runs to 550 residues: 2-succinyl-5-enolpyruvyl-6-hydroxy-3-cyclohexene-1-carboxylate synthase (550 aa).

Belongs to the TPP enzyme family. MenD subfamily. Homodimer. The cofactor is Mg(2+). Mn(2+) serves as cofactor. Thiamine diphosphate is required as a cofactor.

The enzyme catalyses isochorismate + 2-oxoglutarate + H(+) = 5-enolpyruvoyl-6-hydroxy-2-succinyl-cyclohex-3-ene-1-carboxylate + CO2. It participates in quinol/quinone metabolism; 1,4-dihydroxy-2-naphthoate biosynthesis; 1,4-dihydroxy-2-naphthoate from chorismate: step 2/7. It functions in the pathway quinol/quinone metabolism; menaquinone biosynthesis. Its function is as follows. Catalyzes the thiamine diphosphate-dependent decarboxylation of 2-oxoglutarate and the subsequent addition of the resulting succinic semialdehyde-thiamine pyrophosphate anion to isochorismate to yield 2-succinyl-5-enolpyruvyl-6-hydroxy-3-cyclohexene-1-carboxylate (SEPHCHC). The sequence is that of 2-succinyl-5-enolpyruvyl-6-hydroxy-3-cyclohexene-1-carboxylate synthase from Desulfitobacterium hafniense (strain DSM 10664 / DCB-2).